Here is a 150-residue protein sequence, read N- to C-terminus: Ribosomal RNA large subunit methyltransferase H (150 aa).

S-adenosyl-L-methionine is bound by residues Leu68, Gly97, and 116 to 121 (LSAMTL).

It belongs to the RNA methyltransferase RlmH family. As to quaternary structure, homodimer.

The protein resides in the cytoplasm. It catalyses the reaction pseudouridine(1915) in 23S rRNA + S-adenosyl-L-methionine = N(3)-methylpseudouridine(1915) in 23S rRNA + S-adenosyl-L-homocysteine + H(+). Its function is as follows. Specifically methylates the pseudouridine at position 1915 (m3Psi1915) in 23S rRNA. This chain is Ribosomal RNA large subunit methyltransferase H, found in Prochlorococcus marinus (strain MIT 9303).